The chain runs to 1243 residues: Plasma membrane calcium-transporting ATPase 2 (1243 aa).

The segment covering 1 to 13 (MGDMTNSDFYSKN) has biased composition (polar residues). The tract at residues 1–24 (MGDMTNSDFYSKNQRNESSHGGEF) is disordered. The Cytoplasmic portion of the chain corresponds to 1–94 (MGDMTNSDFY…NFIPPKKPKT (94 aa)). 2 positions are modified to phosphoserine: Ser18 and Ser27. A helical membrane pass occupies residues 95–115 (FLQLVWEALQDVTLIILEIAA). The Extracellular portion of the chain corresponds to 116–152 (IISLGLSFYHPPGESNEGCATAQGGAEDEGEAEAGWI). A helical transmembrane segment spans residues 153 to 173 (EGAAILLSVICVVLVTAFNDW). Residues 174-390 (SKEKQFRGLQ…KEKSVLQGKL (217 aa)) are Cytoplasmic-facing. Basic and acidic residues predominate over residues 296–308 (EEKKDKKGVKKGD). The tract at residues 296-382 (EEKKDKKGVK…KKKANMHKKE (87 aa)) is disordered. Composition is skewed to low complexity over residues 313 to 330 (PAAD…ANAS) and 337 to 356 (QDGS…GAAA). Residues 391–410 (TKLAVQIGKAGLVMSAITVI) form a helical membrane-spanning segment. Topologically, residues 411–443 (ILVLYFTVDTFVVNKKPWLTECTPVYVQYFVKF) are extracellular. The chain crosses the membrane as a helical span at residues 444–461 (FIIGVTVLVVAVPEGLPL). Residues 462-875 (AVTISLAYSV…MWGRNVYDSI (414 aa)) are Cytoplasmic-facing. Catalysis depends on Asp499, which acts as the 4-aspartylphosphate intermediate. Residues Asp820 and Asp824 each coordinate Mg(2+). Residues 876–895 (SKFLQFQLTVNVVAVIVAFT) traverse the membrane as a helical segment. At 896 to 905 (GACITQDSPL) the chain is on the extracellular side. A helical transmembrane segment spans residues 906-926 (KAVQMLWVNLIMDTFASLALA). Over 927-946 (TEPPTETLLLRKPYGRNKPL) the chain is Cytoplasmic. Residues 947 to 969 (ISRTMMKNILGHAVYQLTLIFTL) form a helical membrane-spanning segment. Over 970 to 987 (LFVGEKMFQIDSGRNAPL) the chain is Extracellular. Residues 988–1009 (HSPPSEHYTIIFNTFVMMQLFN) form a helical membrane-spanning segment. Residues 1010–1028 (EINARKIHGERNVFDGIFR) are Cytoplasmic-facing. The chain crosses the membrane as a helical span at residues 1029–1050 (NPIFCTIVLGTFAIQIVIVQFG). The Extracellular segment spans residues 1051 to 1060 (GKPFSCSPLQ). A helical membrane pass occupies residues 1061–1082 (LDQWMWCIFIGLGELVWGQVIA). Residues 1083–1243 (TIPTSRLKFL…SPIHSLETSL (161 aa)) are Cytoplasmic-facing. Glu1107, Ile1116, Asp1117, Arg1121, Trp1130, Phe1131, and Gln1138 each carry phosphoserine. Residues 1123–1140 (LRRGQILWFRGLNRIQTQ) form a calmodulin-binding subdomain A region. At Thr1139 the chain carries Phosphothreonine; by PKC. The tract at residues 1141–1150 (IRVVKAFRSS) is calmodulin-binding subdomain B. Phosphoserine is present on residues Val1144, Phe1147, Arg1148, Tyr1152, Arg1161, Thr1162, Ile1175, and Ser1178. Residue Thr1188 is modified to Phosphothreonine. The disordered stretch occupies residues 1194-1243 (AALKQNSSPPSSLNKNNSAIDSGINLTTDTSKSATSSSPGSPIHSLETSL). Low complexity-rich tracts occupy residues 1196-1211 (LKQN…KNNS) and 1220-1234 (TTDT…SPGS). Residue Ser1201 is modified to Phosphoserine; by PKA. Residue Ser1211 is modified to Phosphoserine.

The protein belongs to the cation transport ATPase (P-type) (TC 3.A.3) family. Type IIB subfamily. As to quaternary structure, interacts with PDZD11. In terms of tissue distribution, isoforms containing segment B are found in brain, uterus, liver and kidney and in low levels in other tissues. Isoforms containing segment W are found in kidney, uterus, and pancreas. Isoforms containing segment Y are found in pancreas and in low levels in brain and heart. Isoforms containing segment Z are found in brain and heart and isoforms containing segment X are found in low levels in brain. Isoforms containing segment A are found in low levels in heart and small intestine while isoforms containing segment C are found in testis and in low levels in other tissues.

The protein localises to the cell membrane. Its subcellular location is the synapse. It localises to the apical cell membrane. It is found in the basolateral cell membrane. The enzyme catalyses Ca(2+)(in) + ATP + H2O = Ca(2+)(out) + ADP + phosphate + H(+). ATP-driven Ca(2+) ion pump involved in the maintenance of basal intracellular Ca(2+) levels in specialized cells of cerebellar circuit and vestibular and cochlear systems. Uses ATP as an energy source to transport cytosolic Ca(2+) ions across the plasma membrane to the extracellular compartment. Has fast activation and Ca(2+) clearance rate suited to control fast neuronal Ca(2+) dynamics. At parallel fiber to Purkinje neuron synapse, mediates presynaptic Ca(2+) efflux in response to climbing fiber-induced Ca(2+) rise. Provides for fast return of Ca(2+) concentrations back to their resting levels, ultimately contributing to long-term depression induction and motor learning. Plays an essential role in hearing and balance. In cochlear hair cells, shuttles Ca(2+) ions from stereocilia to the endolymph and dissipates Ca(2+) transients generated by the opening of the mechanoelectrical transduction channels. Regulates Ca(2+) levels in the vestibular system, where it contributes to the formation of otoconia. In non-excitable cells, regulates Ca(2+) signaling through spatial control of Ca(2+) ions extrusion and dissipation of Ca(2+) transients generated by store-operated channels. In lactating mammary gland, allows for the high content of Ca(2+) ions in the milk. In Rattus norvegicus (Rat), this protein is Plasma membrane calcium-transporting ATPase 2 (Atp2b2).